A 986-amino-acid polypeptide reads, in one-letter code: Translation initiation factor IF-2 (986 aa).

The interval 95-394 (TFVRRDETSA…GRGKHQDQNT (300 aa)) is disordered. A compositionally biased stretch (basic and acidic residues) spans 122 to 182 (ELQRREEEAR…EEEAAKKRAA (61 aa)). The span at 183-222 (AEAAAREQAQAAKPAQAAQPAAAKAEPVAAKAAEPAVAKQ) shows a compositional bias: low complexity. Residues 228-277 (ERAAAERAAQREAAKKAEDAARQAAEKARAEQEQIAKRRAAAEAEARAIR) show a composition bias toward basic and acidic residues. The segment covering 320 to 342 (APSRPAAKKPAAAAPAATTTPSA) has biased composition (low complexity). Residues 371 to 384 (TSGGVDRGWRGGPK) show a composition bias toward gly residues. The region spanning 486–655 (PRPPVVTVMG…LLQAEVLELK (170 aa)) is the tr-type G domain. The segment at 495–502 (GHVDHGKT) is G1. 495–502 (GHVDHGKT) contacts GTP. The G2 stretch occupies residues 520–524 (GITQH). The tract at residues 541–544 (DTPG) is G3. Residues 541-545 (DTPGH) and 595-598 (NKID) contribute to the GTP site. The interval 595–598 (NKID) is G4. Residues 631–633 (SAK) form a G5 region.

This sequence belongs to the TRAFAC class translation factor GTPase superfamily. Classic translation factor GTPase family. IF-2 subfamily.

The protein localises to the cytoplasm. In terms of biological role, one of the essential components for the initiation of protein synthesis. Protects formylmethionyl-tRNA from spontaneous hydrolysis and promotes its binding to the 30S ribosomal subunits. Also involved in the hydrolysis of GTP during the formation of the 70S ribosomal complex. This chain is Translation initiation factor IF-2, found in Paraburkholderia phytofirmans (strain DSM 17436 / LMG 22146 / PsJN) (Burkholderia phytofirmans).